The chain runs to 478 residues: ATP-dependent RNA helicase DDX19A (478 aa).

N-acetylalanine is present on A2. Positions 2 to 299 are N-terminal lobe; that stretch reads ATDSWALAVD…DPNIIKLKRE (298 aa). A Glycyl lysine isopeptide (Lys-Gly) (interchain with G-Cter in SUMO1); alternate cross-link involves residue K26. A Glycyl lysine isopeptide (Lys-Gly) (interchain with G-Cter in SUMO2); alternate cross-link involves residue K26. The segment at 34 to 53 is disordered; that stretch reads TNGVIKTSTTAEKTEEEEKE. At T42 the chain carries Phosphothreonine. The segment at 54 to 67 is N-terminal helix; it reads DRAAQSLLNKLIRS. The short motif at 91–119 is the Q motif element; the sequence is KSFEELRLKPQLLQGVYAMGFNRPSKIQE. ATP-binding positions include Q118 and 137–144; that span reads SQSGTGKT. The Helicase ATP-binding domain maps to 124–294; the sequence is MMLAEPPQNL…QKVVPDPNII (171 aa). The DEAD box motif lies at 241–244; that stretch reads DEAD. The tract at residues 300-478 is C-terminal lobe; sequence EETLDTIKQY…DLDEIEKIAN (179 aa). A Helicase C-terminal domain is found at 305–473; sequence TIKQYYVLCN…RLDTDDLDEI (169 aa). ATP contacts are provided by R428 and R431.

It belongs to the DEAD box helicase family. DDX19/DBP5 subfamily. Found in testis, heart, brain, liver, skeletal muscle, and kidney.

It is found in the cytoplasm. The protein resides in the nucleus. The protein localises to the nucleoplasm. The catalysed reaction is ATP + H2O = ADP + phosphate + H(+). Functionally, ATP-dependent RNA helicase involved in mRNA export from the nucleus. Rather than unwinding RNA duplexes, DDX19 functions as a remodeler of ribonucleoprotein particles, whereby proteins bound to nuclear mRNA are dissociated and replaced by cytoplasmic mRNA binding proteins. This chain is ATP-dependent RNA helicase DDX19A (Ddx19a), found in Mus musculus (Mouse).